A 162-amino-acid chain; its full sequence is UPF0114 protein SO_3997 (162 aa).

3 consecutive transmembrane segments (helical) span residues 10–32, 53–75, and 136–156; these read YASRWIMAPIYLGLSLVLLGLGI, LVLVTLSLIDITLVGGLIVMVMF, and IMWYLLIHITFVLSAFAMGYL.

Belongs to the UPF0114 family.

It is found in the cell membrane. In Shewanella oneidensis (strain ATCC 700550 / JCM 31522 / CIP 106686 / LMG 19005 / NCIMB 14063 / MR-1), this protein is UPF0114 protein SO_3997.